A 307-amino-acid chain; its full sequence is Nucleotide-binding protein Arth_2083 (307 aa).

30–37 (GMSGAGRS) lines the ATP pocket. Residue 81 to 84 (DVRS) coordinates GTP.

It belongs to the RapZ-like family.

Functionally, displays ATPase and GTPase activities. In Arthrobacter sp. (strain FB24), this protein is Nucleotide-binding protein Arth_2083.